We begin with the raw amino-acid sequence, 502 residues long: uncharacterized protein (502 aa).

The next 2 membrane-spanning stretches (helical) occupy residues 10–30 (NLTL…IXIF) and 473–493 (FSLI…FGLV).

It localises to the cell membrane. This is an uncharacterized protein from Borreliella burgdorferi (strain ATCC 35210 / DSM 4680 / CIP 102532 / B31) (Borrelia burgdorferi).